The following is a 374-amino-acid chain: Peptide chain release factor 2 (374 aa).

The residue at position 250 (Gln-250) is an N5-methylglutamine.

Belongs to the prokaryotic/mitochondrial release factor family. In terms of processing, methylated by PrmC. Methylation increases the termination efficiency of RF2.

The protein resides in the cytoplasm. Its function is as follows. Peptide chain release factor 2 directs the termination of translation in response to the peptide chain termination codons UGA and UAA. In Beutenbergia cavernae (strain ATCC BAA-8 / DSM 12333 / CCUG 43141 / JCM 11478 / NBRC 16432 / NCIMB 13614 / HKI 0122), this protein is Peptide chain release factor 2.